The primary structure comprises 296 residues: 4-diphosphocytidyl-2-C-methyl-D-erythritol kinase (296 aa).

K22 is an active-site residue. Residue 105–115 (PMGGGLGGGSS) coordinates ATP. D147 is an active-site residue.

It belongs to the GHMP kinase family. IspE subfamily.

It carries out the reaction 4-CDP-2-C-methyl-D-erythritol + ATP = 4-CDP-2-C-methyl-D-erythritol 2-phosphate + ADP + H(+). The protein operates within isoprenoid biosynthesis; isopentenyl diphosphate biosynthesis via DXP pathway; isopentenyl diphosphate from 1-deoxy-D-xylulose 5-phosphate: step 3/6. In terms of biological role, catalyzes the phosphorylation of the position 2 hydroxy group of 4-diphosphocytidyl-2C-methyl-D-erythritol. In Photobacterium profundum (strain SS9), this protein is 4-diphosphocytidyl-2-C-methyl-D-erythritol kinase.